A 106-amino-acid polypeptide reads, in one-letter code: UPF0145 protein BDI_2732 (106 aa).

This sequence belongs to the UPF0145 family.

This chain is UPF0145 protein BDI_2732, found in Parabacteroides distasonis (strain ATCC 8503 / DSM 20701 / CIP 104284 / JCM 5825 / NCTC 11152).